A 506-amino-acid polypeptide reads, in one-letter code: NAD(P)H-quinone oxidoreductase subunit 2 (506 aa).

A run of 14 helical transmembrane segments spans residues 14-34 (AIIPEAFILLGIVGTLLVDLA), 42-62 (WAPVICYISLGSSLISLALQW), 79-99 (LAIAFRSIIALSTLISLLISW), 108-128 (PIGEFAAIVLSATLGAMLLCG), 132-152 (LVSVFISLETLSVASYCLSGY), 167-187 (LLVGSAAAAVYLYGSSFLYGL), 206-226 (FITSLSLVFVLSTVAFKIAAV), 240-260 (PTPVVAFLSVGSKTAGFAFAI), 276-296 (LLFTILAILSMALGNIVALAQ), 302-322 (MLAYSSIGQAGFVMIGIVSGT), 330-350 (VLYLAAYLFMNLGAFSCVILF), 374-394 (LGLSLCLLSLGGLPPMLGFFG), 409-429 (LLVVVGLITSVISIYYYISVI), and 462-482 (IALYTCIAVTALGGILSNPLF).

The protein belongs to the complex I subunit 2 family. As to quaternary structure, NDH-1 can be composed of about 15 different subunits; different subcomplexes with different compositions have been identified which probably have different functions.

Its subcellular location is the cellular thylakoid membrane. It catalyses the reaction a plastoquinone + NADH + (n+1) H(+)(in) = a plastoquinol + NAD(+) + n H(+)(out). It carries out the reaction a plastoquinone + NADPH + (n+1) H(+)(in) = a plastoquinol + NADP(+) + n H(+)(out). NDH-1 shuttles electrons from an unknown electron donor, via FMN and iron-sulfur (Fe-S) centers, to quinones in the respiratory and/or the photosynthetic chain. The immediate electron acceptor for the enzyme in this species is believed to be plastoquinone. Couples the redox reaction to proton translocation, and thus conserves the redox energy in a proton gradient. Cyanobacterial NDH-1 also plays a role in inorganic carbon-concentration. The protein is NAD(P)H-quinone oxidoreductase subunit 2 of Prochlorococcus marinus subsp. pastoris (strain CCMP1986 / NIES-2087 / MED4).